Consider the following 304-residue polypeptide: ADP-ribosyl cyclase/cyclic ADP-ribose hydrolase 1 (304 aa).

At 1–21 the chain is on the cytoplasmic side; it reads MANYEFSQVSGDRPGCRLSRK. The helical; Signal-anchor for type II membrane protein transmembrane segment at 22–44 threads the bilayer; it reads AQIGLGVGLLVLIALVVGIVVIL. Topologically, residues 45-304 are extracellular; the sequence is LRPRSLLVWT…PEHPSCRLNT (260 aa). 3 cysteine pairs are disulfide-bonded: Cys70/Cys86, Cys103/Cys184, and Cys164/Cys177. Residue Asn104 is glycosylated (N-linked (GlcNAc...) asparagine). Cys123 is a catalytic residue. Asn124 carries an N-linked (GlcNAc...) asparagine glycan. The active site involves Cys205. Asn213 and Asn223 each carry an N-linked (GlcNAc...) asparagine glycan. 2 disulfide bridges follow: Cys258/Cys279 and Cys291/Cys300.

The protein belongs to the ADP-ribosyl cyclase family. Homodimer.

It localises to the membrane. It carries out the reaction NAD(+) = cyclic ADP-beta-D-ribose + nicotinamide + H(+). It catalyses the reaction nicotinate + NADP(+) = nicotinate-adenine dinucleotide phosphate + nicotinamide. The enzyme catalyses NAD(+) + H2O = ADP-D-ribose + nicotinamide + H(+). Synthesizes the second messengers cyclic ADP-ribose (cADPR) and nicotinate-adenine dinucleotide phosphate (NAADP), the former a second messenger for glucose-induced insulin secretion, the latter a Ca(2+) mobilizer. Also has cADPR hydrolase activity. The sequence is that of ADP-ribosyl cyclase/cyclic ADP-ribose hydrolase 1 (Cd38) from Mus musculus (Mouse).